The sequence spans 302 residues: Ribose-5-phosphate isomerase (302 aa).

The protein belongs to the ribose 5-phosphate isomerase family.

Its subcellular location is the cytoplasm. It carries out the reaction aldehydo-D-ribose 5-phosphate = D-ribulose 5-phosphate. Its pathway is carbohydrate degradation; pentose phosphate pathway; D-ribose 5-phosphate from D-ribulose 5-phosphate (non-oxidative stage): step 1/1. The protein is Ribose-5-phosphate isomerase (RKI1) of Cryptococcus neoformans var. neoformans serotype D (strain B-3501A) (Filobasidiella neoformans).